Consider the following 490-residue polypeptide: MTELSSPNLDSASQKPRISTENPPPPPPHISIGVTTGDPATSPARTVNQIKKITVLPLVFLIFYEVSGGPFGIEDSVKAAGPLLAIVGFIVFPFIWSIPEALITAEMGTMFPENGGYVVWVTLAMGPYWGFQQGWVKWLSGVIDNALYPILFLDYLKSGIPILGSGIPRVAAILVLTVALTYLNYRGLSIVGVAAVLLGVFSILPFVVMSFMSIPKLKPSRWLVVSKKMKGVNWSLYLNTLFWNLNYWDSVSTLTGEVENPSKTLPRALFYALLLVVFSYIFPVLTGTGAIALDQKLWTDGYFADIGKVIGGVWLGWWIQAAAATSNMGMFLAEMSSDSFQLLGMAERGMLPEVFAKRSRYRTPWVGILFSASGVIILSWLSFQEIVAAENLLYCFGMVLEFITFVRLRMKYPAASRPFKIPVGVLGSVLMCIPPTVLIGVIMAFTNLKVALVSLAAIVIGLVLQPCLKQVEKKGWLKFSTSSHLPNLME.

Polar residues predominate over residues 1–21 (MTELSSPNLDSASQKPRISTE). The disordered stretch occupies residues 1-38 (MTELSSPNLDSASQKPRISTENPPPPPPHISIGVTTGD). 12 helical membrane passes run 53 to 73 (ITVLPLVFLIFYEVSGGPFGI), 83 to 103 (LLAIVGFIVFPFIWSIPEALI), 116 to 136 (GYVVWVTLAMGPYWGFQQGWV), 160 to 180 (IPILGSGIPRVAAILVLTVAL), 188 to 208 (LSIVGVAAVLLGVFSILPFVV), 231 to 248 (GVNWSLYLNTLFWNLNYW), 273 to 293 (LLLVVFSYIFPVLTGTGAIAL), 303 to 323 (FADIGKVIGGVWLGWWIQAAA), 363 to 383 (TPWVGILFSASGVIILSWLSF), 386 to 406 (IVAAENLLYCFGMVLEFITFV), 425 to 445 (VLGSVLMCIPPTVLIGVIMAF), and 448 to 468 (LKVALVSLAAIVIGLVLQPCL).

It belongs to the amino acid-polyamine-organocation (APC) superfamily. Polyamine:cation symporter (PHS) (TC 2.A.3.12) family.

It localises to the cell membrane. In terms of biological role, cell membrane polyamine/proton symporter involved in the polyamine uptake in cells. Possesses high affinity for spermine and spermidine and lower affinity for putrescine. Transports paraquat, a polyamine analog, and thus confers sensitivity to this chemical which is used as a herbicide. This is Polyamine transporter RMV1 (RMV1) from Arabidopsis thaliana (Mouse-ear cress).